The sequence spans 145 residues: YIDKETMILHHDKHHATYLANANAALEKHPEIGEDLEFLLSDVTRIPEDIRQALINNGGGHLNHALFWELLTPEKQEPTAEVLAAIEDAFGSFEDFKTAFTQAATTRFGSGWAWLVVNQEGKLEVMSTGNQDNPISQGKQPILGL.

The Fe(3+) site is built by His10 and His64. Mn(2+)-binding residues include His10 and His64.

The protein belongs to the iron/manganese superoxide dismutase family. It depends on Mn(2+) as a cofactor. The cofactor is Fe(3+).

The catalysed reaction is 2 superoxide + 2 H(+) = H2O2 + O2. Its function is as follows. Destroys superoxide anion radicals which are normally produced within the cells and which are toxic to biological systems. Catalyzes the dismutation of superoxide anion radicals into O2 and H2O2 by successive reduction and oxidation of the transition metal ion at the active site. The sequence is that of Superoxide dismutase [Mn/Fe] (sodA) from Streptococcus alactolyticus.